Here is a 276-residue protein sequence, read N- to C-terminus: Urease accessory protein UreD (276 aa).

Belongs to the UreD family. In terms of assembly, ureD, UreF and UreG form a complex that acts as a GTP-hydrolysis-dependent molecular chaperone, activating the urease apoprotein by helping to assemble the nickel containing metallocenter of UreC. The UreE protein probably delivers the nickel.

Its subcellular location is the cytoplasm. Required for maturation of urease via the functional incorporation of the urease nickel metallocenter. This is Urease accessory protein UreD from Polaromonas sp. (strain JS666 / ATCC BAA-500).